We begin with the raw amino-acid sequence, 195 residues long: Dephospho-CoA kinase (195 aa).

In terms of domain architecture, DPCK spans 2–195 (IISLTGGIGV…DIVDSLNLNT (194 aa)). ATP is bound at residue 10–15 (GVGKSF).

It belongs to the CoaE family.

The protein localises to the cytoplasm. It catalyses the reaction 3'-dephospho-CoA + ATP = ADP + CoA + H(+). Its pathway is cofactor biosynthesis; coenzyme A biosynthesis; CoA from (R)-pantothenate: step 5/5. Its function is as follows. Catalyzes the phosphorylation of the 3'-hydroxyl group of dephosphocoenzyme A to form coenzyme A. This chain is Dephospho-CoA kinase, found in Wolbachia pipientis wMel.